Consider the following 274-residue polypeptide: HTH-type transcriptional regulator GadX (274 aa).

Positions 145–242 (TRVCTVINNN…GMTPTEYQER (98 aa)) constitute an HTH araC/xylS-type domain. 2 DNA-binding regions (H-T-H motif) span residues 162 to 183 (ARIA…REEE) and 209 to 232 (IKRV…RNYY).

In terms of assembly, homodimer.

In terms of biological role, positively regulates the expression of about fifteen genes involved in acid resistance such as gadA, gadB and gadC. Depending on the conditions (growth phase and medium), can repress gadW. The protein is HTH-type transcriptional regulator GadX (gadX) of Escherichia coli (strain K12).